A 669-amino-acid polypeptide reads, in one-letter code: DNA ligase (669 aa).

NAD(+) contacts are provided by residues 34–38 (DAEYD), 83–84 (SL), and E114. The N6-AMP-lysine intermediate role is filled by K116. R137, E171, K287, and K311 together coordinate NAD(+). Positions 405, 408, 423, and 428 each coordinate Zn(2+). One can recognise a BRCT domain in the interval 591–669 (NVESYFAGKT…EERFLQELNK (79 aa)).

Belongs to the NAD-dependent DNA ligase family. LigA subfamily. Mg(2+) serves as cofactor. Requires Mn(2+) as cofactor.

The enzyme catalyses NAD(+) + (deoxyribonucleotide)n-3'-hydroxyl + 5'-phospho-(deoxyribonucleotide)m = (deoxyribonucleotide)n+m + AMP + beta-nicotinamide D-nucleotide.. Functionally, DNA ligase that catalyzes the formation of phosphodiester linkages between 5'-phosphoryl and 3'-hydroxyl groups in double-stranded DNA using NAD as a coenzyme and as the energy source for the reaction. It is essential for DNA replication and repair of damaged DNA. This Bacillus cereus (strain AH187) protein is DNA ligase.